The sequence spans 180 residues: Isopentenyl-diphosphate Delta-isomerase (180 aa).

Positions 26 and 32 each coordinate Mn(2+). The Nudix hydrolase domain maps to 30–168; the sequence is ALHLAFSVLL…PELFTAWFPQ (139 aa). Residue Cys70 is part of the active site. Cys70 contacts Mg(2+). A Mn(2+)-binding site is contributed by His72. Glu90 lines the Mg(2+) pocket. Residues Glu117 and Glu119 each coordinate Mn(2+). Glu119 is a catalytic residue.

Belongs to the IPP isomerase type 1 family. The cofactor is Mg(2+). It depends on Mn(2+) as a cofactor.

The protein resides in the cytoplasm. It catalyses the reaction isopentenyl diphosphate = dimethylallyl diphosphate. The protein operates within isoprenoid biosynthesis; dimethylallyl diphosphate biosynthesis; dimethylallyl diphosphate from isopentenyl diphosphate: step 1/1. Its function is as follows. Catalyzes the 1,3-allylic rearrangement of the homoallylic substrate isopentenyl (IPP) to its highly electrophilic allylic isomer, dimethylallyl diphosphate (DMAPP). This Photobacterium profundum (strain SS9) protein is Isopentenyl-diphosphate Delta-isomerase.